The following is a 371-amino-acid chain: Neuropeptide S receptor (371 aa).

Residues 1–21 (MPANFTEGSFDSSGTGQTLDS) show a composition bias toward polar residues. Residues 1-22 (MPANFTEGSFDSSGTGQTLDSS) are disordered. The Extracellular segment spans residues 1–52 (MPANFTEGSFDSSGTGQTLDSSPVACTETVTFTEVVEGKEWGSFYYSFKTEQ). N4 is a glycosylation site (N-linked (GlcNAc...) asparagine). Residues 53–73 (LITLWVLFVFTIVGNSVVLFS) form a helical membrane-spanning segment. Residues 74–82 (TWRRKKKSR) are Cytoplasmic-facing. The helical transmembrane segment at 83-103 (MTFFVTQLAITDSFTGLVNIL) threads the bilayer. Residues 104–123 (TDINWRFTGDFTAPDLVCRV) lie on the Extracellular side of the membrane. C121 and C197 are joined by a disulfide. Residues 124–144 (VRYLQVVLLYASTYVLVSLSI) traverse the membrane as a helical segment. Over 145 to 164 (DRYHAIVYPMKFLQGEKQAR) the chain is Cytoplasmic. A helical transmembrane segment spans residues 165-185 (VLIVIAWSLSFLFSIPTLIIF). The Extracellular portion of the chain corresponds to 186-212 (GKRTLSNGEVQCWALWPDDSYWTPYMT). The chain crosses the membrane as a helical span at residues 213-233 (IVAFLVYFIPLTIISIMYGIV). At 234–275 (IRTIWIKSKTYETVISNCSDGKLCSSYNRGLISKAKIKAIKY) the chain is on the cytoplasmic side. Residues 276–296 (SIIIILAFICCWSPYFLFDIL) traverse the membrane as a helical segment. Topologically, residues 297–312 (DNFNLLPDTQERFYAS) are extracellular. The chain crosses the membrane as a helical span at residues 313–333 (VIIQNLPALNSAINPLIYCVF). At 334 to 371 (SSSISFPCREQRSQDSRMTFRERTERHEMQILSKPEFI) the chain is on the cytoplasmic side.

This sequence belongs to the G-protein coupled receptor 1 family. Vasopressin/oxytocin receptor subfamily. As to expression, isoform 4 is ubiquitous; it is detected in glandular epithelia of bronchus, stomach, small intestine, colon, uterus, esophagus, spleen, kidney, pancreas, prostate and breast. Isoform 1 is detected in uterus, colon and prostate, and in the smooth muscle cell layer in bronchial and arterial walls (at protein level). Isoform 1 is predominantly expressed in smooth muscle. Isoform 4 is predominantly expressed in epithelial cells. In bronchial biopsies, it is expressed in smooth muscle cells of asthma patients, but not in control patients; whereas in epithelial cells, its expression is consistently stronger in asthma patients.

It is found in the cell membrane. It localises to the cytoplasm. Functionally, G-protein coupled receptor for neuropeptide S (NPS). Promotes mobilization of intracellular Ca(2+) stores. Inhibits cell growth in response to NPS binding. Involved in pathogenesis of asthma and other IgE-mediated diseases. In Homo sapiens (Human), this protein is Neuropeptide S receptor (NPSR1).